The chain runs to 234 residues: Segregation and condensation protein A (234 aa).

The protein belongs to the ScpA family. In terms of assembly, component of a cohesin-like complex composed of ScpA, ScpB and the Smc homodimer, in which ScpA and ScpB bind to the head domain of Smc. The presence of the three proteins is required for the association of the complex with DNA.

The protein resides in the cytoplasm. Its function is as follows. Participates in chromosomal partition during cell division. May act via the formation of a condensin-like complex containing Smc and ScpB that pull DNA away from mid-cell into both cell halves. The protein is Segregation and condensation protein A of Streptococcus pyogenes serotype M5 (strain Manfredo).